The following is a 705-amino-acid chain: Translation initiation factor IF-2 (705 aa).

The segment at 40–124 (DDQIKALDKK…QPAAPKEIPS (85 aa)) is disordered. Basic and acidic residues predominate over residues 41–58 (DQIKALDKKFKKEQKNDN). A compositionally biased stretch (low complexity) spans 59-77 (KQSTQNNHQKSNNQNQNKG). The span at 94-108 (KGNKKNNRNNKKNNK) shows a compositional bias: basic residues. The tr-type G domain occupies 207-376 (ERPAVVTIMG…GLVAEVQELK (170 aa)). Residues 216 to 223 (GHVDHGKT) are G1. Residue 216 to 223 (GHVDHGKT) participates in GTP binding. Residues 241 to 245 (GITQH) are G2. Residues 262 to 265 (DTPG) form a G3 region. Residues 262 to 266 (DTPGH) and 316 to 319 (NKID) contribute to the GTP site. Positions 316–319 (NKID) are G4. The tract at residues 352–354 (SAL) is G5.

It belongs to the TRAFAC class translation factor GTPase superfamily. Classic translation factor GTPase family. IF-2 subfamily.

The protein resides in the cytoplasm. Its function is as follows. One of the essential components for the initiation of protein synthesis. Protects formylmethionyl-tRNA from spontaneous hydrolysis and promotes its binding to the 30S ribosomal subunits. Also involved in the hydrolysis of GTP during the formation of the 70S ribosomal complex. In Staphylococcus aureus (strain Mu3 / ATCC 700698), this protein is Translation initiation factor IF-2.